The following is a 288-amino-acid chain: Alpha-acetolactate decarboxylase (288 aa).

Positions 1-23 are cleaved as a signal peptide; it reads MNIKYFLIFLILLAVTSFTLFSG.

Belongs to the alpha-acetolactate decarboxylase family.

The enzyme catalyses (2S)-2-acetolactate + H(+) = (R)-acetoin + CO2. It functions in the pathway polyol metabolism; (R,R)-butane-2,3-diol biosynthesis; (R,R)-butane-2,3-diol from pyruvate: step 2/3. Functionally, converts acetolactate into acetoin. This chain is Alpha-acetolactate decarboxylase, found in Methanosarcina mazei (strain ATCC BAA-159 / DSM 3647 / Goe1 / Go1 / JCM 11833 / OCM 88) (Methanosarcina frisia).